Reading from the N-terminus, the 358-residue chain is 3-dehydroquinate synthase (358 aa).

NAD(+)-binding positions include 105 to 109 (GVVGD), 129 to 130 (TT), Lys-142, Lys-151, and 169 to 172 (TLKT). Zn(2+) contacts are provided by Glu-184, His-245, and His-262.

It belongs to the sugar phosphate cyclases superfamily. Dehydroquinate synthase family. NAD(+) is required as a cofactor. The cofactor is Co(2+). It depends on Zn(2+) as a cofactor.

It localises to the cytoplasm. It carries out the reaction 7-phospho-2-dehydro-3-deoxy-D-arabino-heptonate = 3-dehydroquinate + phosphate. The protein operates within metabolic intermediate biosynthesis; chorismate biosynthesis; chorismate from D-erythrose 4-phosphate and phosphoenolpyruvate: step 2/7. Functionally, catalyzes the conversion of 3-deoxy-D-arabino-heptulosonate 7-phosphate (DAHP) to dehydroquinate (DHQ). This Enterococcus faecalis (strain ATCC 47077 / OG1RF) protein is 3-dehydroquinate synthase.